The following is a 428-amino-acid chain: Enolase (428 aa).

(2R)-2-phosphoglycerate is bound at residue Gln163. Glu205 (proton donor) is an active-site residue. Positions 242, 286, and 313 each coordinate Mg(2+). The (2R)-2-phosphoglycerate site is built by Lys338, Arg367, Ser368, and Lys389. The Proton acceptor role is filled by Lys338.

It belongs to the enolase family. Mg(2+) is required as a cofactor.

It localises to the cytoplasm. The protein resides in the secreted. It is found in the cell surface. It catalyses the reaction (2R)-2-phosphoglycerate = phosphoenolpyruvate + H2O. Its pathway is carbohydrate degradation; glycolysis; pyruvate from D-glyceraldehyde 3-phosphate: step 4/5. Functionally, catalyzes the reversible conversion of 2-phosphoglycerate (2-PG) into phosphoenolpyruvate (PEP). It is essential for the degradation of carbohydrates via glycolysis. This chain is Enolase, found in Acidovorax ebreus (strain TPSY) (Diaphorobacter sp. (strain TPSY)).